The chain runs to 266 residues: Short-chain dehydrogenase/reductase tropE (266 aa).

3 residues coordinate NADP(+): Leu18, Asp69, and Asn96. Residue Ser147 is the Proton donor of the active site. NADP(+) is bound by residues Tyr181, Lys185, and Thr216. The active-site Proton acceptor is Tyr181. The active-site Lowers pKa of active site Tyr is Lys185.

It belongs to the short-chain dehydrogenases/reductases (SDR) family.

It participates in secondary metabolite biosynthesis. In terms of biological role, short-chain dehydrogenase/reductase; part of the gene cluster that mediates the biosynthesis of the tropolone class of fungal maleic anhydrides. The pathway begins with the synthesis of 3-methylorcinaldehyde by the non-reducing polyketide synthase (PKS) tropA. 3-methylorcinaldehyde is the substrate for the FAD-dependent monooxygenase tropB to yield a dearomatized hydroxycyclohexadione. The 2-oxoglutarate-dependent dioxygenase tropC then performs the oxidative ring expansion to provide the first tropolone metabolite stipitaldehyde. Trop D converts stipitaldehyde into stipitacetal which is in turn converted to stipitalide by the short-chain dehydrogenase/reductase tropE. The next steps involve tropF, tropG, tropH, tropI and tropJ to form successive tropolone maleic anhydrides including stipitaldehydic, stipitatonic and stipitatic acids. The protein is Short-chain dehydrogenase/reductase tropE of Talaromyces stipitatus (strain ATCC 10500 / CBS 375.48 / QM 6759 / NRRL 1006) (Penicillium stipitatum).